A 639-amino-acid polypeptide reads, in one-letter code: MDNDKKHVIPREQYRRKRHEYFHNEEREERLEREREQRERLAKKEQEQAKVNEERVKDNMRKARIEKLTQEEIHQQQHLAKLRSDNESDQELNDTNTHHLTLPEEQQLKNEHKENNDKVTKPTDEMEKQEKEDNNSASSKHDEIEPKYSRVEKNKGKQKQDNINKSEVNHLDKSEQTKKHKETKESSEDVLETNKSQKIEQKEQKASSNETSNKELNSYTKDKNNKVEDNQDLKKASSQNLAHSNKLEENEHLENEPKNNDTMDKVKDFLKLHWLKIVIVVAIILIVILISAIISTMNQNSSIEQSSNNDTKYTTTMKNAETAVKSVVTIENDTPKNITTQTIDKTNINSNNEVGSGVVYKAVDDTFFILTNTHIVGSNKRVNITYDDDKTATATVVGRDMWSDIAVLKATIKNKNMQPIKIGHSKHLKLGESILVVGNPLGNDFKNTVTKGIISGLNRAVPVDFDKDNKNDEWVNTFQIDASVNPGNSGGAVVNRVGELVGLVSLKINMPNIEGMGFAIPIDAAREIAEELEKKGEIQYPNTGIGIKNVSDLMPYERNLLKVPEDVQNGIVVEKLKENGLGKKSGLKIGDVVVELDSKSIQNNLQYRQIIFNHRQDLKTLSAKIYREGKSQEIRIKLK.

Basic and acidic residues-rich tracts occupy residues 1–13 (MDNDKKHVIPREQ), 21–75 (YFHN…EIHQ), 106–187 (QQLK…KESS), and 195–205 (KSQKIEQKEQK). The segment at 1 to 262 (MDNDKKHVIP…LENEPKNNDT (262 aa)) is disordered. Residues 206 to 219 (ASSNETSNKELNSY) show a composition bias toward polar residues. Composition is skewed to basic and acidic residues over residues 220 to 235 (TKDKNNKVEDNQDLKK) and 245 to 262 (NKLEENEHLENEPKNNDT). Residues 277 to 297 (IVIVVAIILIVILISAIISTM) form a helical membrane-spanning segment. Residues H374, D404, and S489 each act as charge relay system in the active site. The PDZ domain occupies 527-629 (EIAEELEKKG…TLSAKIYREG (103 aa)).

This sequence belongs to the peptidase S1C family.

The protein localises to the cell membrane. The protein is Serine protease HtrA-like of Staphylococcus haemolyticus (strain JCSC1435).